The sequence spans 551 residues: Cleavage and polyadenylation specificity factor subunit 6 (551 aa).

Residues 1-213 are necessary for interaction with NXF1; sequence MADGVDHIDI…RGRFPGAVPG (213 aa). Positions 81-161 constitute an RRM domain; the sequence is IALYIGNLTW…QNPVVTPCNK (81 aa). Residues 81–161 are necessary for interaction with NUDT21/CPSF5; it reads IALYIGNLTW…QNPVVTPCNK (81 aa). The segment at 81–161 is necessary for nuclear paraspeckles localization; the sequence is IALYIGNLTW…QNPVVTPCNK (81 aa). Phosphothreonine is present on T157. The segment covering 169–180 has biased composition (polar residues); that stretch reads MQSRKTTQSGQM. 2 disordered regions span residues 169 to 411 and 477 to 551; these read MQSR…PLSE and LHGI…YRHR. A GAR motif is present at residues 202–206; sequence RGRGR. The span at 207 to 219 shows a compositional bias: low complexity; sequence FPGAVPGGDRFPG. 3 stretches are compositionally biased toward pro residues: residues 220–265, 285–366, and 377–388; these read PAGP…PLAG, GQPP…PPPT, and GPPPTDPYGRPP. A (Microbial infection) Binds to HIV-1 capsid protein p24 (CA) region spans residues 358–551; it reads NPAFFPPPTN…RDREREYRHR (194 aa). A compositionally biased stretch (basic and acidic residues) spans 389-404; it reads PYDRGDYGPPGREMDT. 2 positions are modified to phosphothreonine: T404 and T407. A sufficient for nuclear speckle localization region spans residues 404 to 551; it reads TARTPLSEAE…RDREREYRHR (148 aa). The tract at residues 405 to 551 is necessary for RNA-binding; that stretch reads ARTPLSEAEF…RDREREYRHR (147 aa). The segment at 481–551 is necessary for interaction with SRSF3, SRSF7 and TRA2B/SFRS10; that stretch reads ESKSYGSGSR…RDREREYRHR (71 aa). A compositionally biased stretch (basic and acidic residues) spans 489–503; the sequence is SRRERSRERDHSRSR. Positions 490 to 551 are arg/Ser-rich domain; it reads RRERSRERDH…RDREREYRHR (62 aa). Phosphoserine occurs at positions 494, 500, 511, 513, and 525. Positions 504–514 are enriched in basic residues; sequence EKSRRHKSRSR. Residues 510 to 551 are sufficient for nuclear targeting; the sequence is KSRSRDRHDDYYRERSRERERHRDRDRDRDRERDREREYRHR. Positions 515 to 551 are enriched in basic and acidic residues; the sequence is DRHDDYYRERSRERERHRDRDRDRDRERDREREYRHR.

The protein belongs to the RRM CPSF6/7 family. Component of the cleavage factor Im (CFIm) complex which is a heterotetramer composed of two subunits of NUDT21/CPSF5 and two subunits of CPSF6 or CPSF7 or a heterodimer of CPSF6 and CPSF7. The cleavage factor Im (CFIm) complex associates with the CPSF and CSTF complexes to promote the assembly of the core mRNA 3'-processing machinery. Associates with the exon junction complex (EJC). Associates with the 80S ribosome particle. Interacts (via the RRM domain) with NUDT21/CPSF5; this interaction is direct and enhances binding to RNA. Interacts (via Arg/Ser-rich domain) with FIP1L1 (preferentially via unphosphorylated form and Arg/Glu/Asp-rich domain); this interaction mediates, at least in part, the interaction between the CFIm and CPSF complexes and may be inhibited by CPSF6 hyper-phosphorylation. Interacts (via N-terminus) with NXF1; this interaction is direct. Interacts with SRSF3. Interacts with SRSF7. Interacts with SNRNP70. Interacts with TRA2B/SFRS10. Interacts with UPF1. Interacts with UPF3B. Interacts with VIRMA. Interacts (via Arg/Ser-rich domain) with TNPO3; promoting nuclear import of CPSF6 independently of its phosphorylation status. Interacts with YTHDC1. As to quaternary structure, (Microbial infection) Interacts (via C-terminus) with HIV-1 capsid protein p24 (CA). Post-translationally, phosphorylated. Phosphorylated in the Arg/Ser-rich domain by SRPK1, in vitro. In terms of processing, symmetrically dimethylated on arginine residues in the GAR motif by PRMT5 in a WDR77- and CLNS1A-dependent manner. Asymmetrically dimethylated on arginine residues in the GAR motif by PRMT1.

It is found in the nucleus. The protein localises to the nucleoplasm. It localises to the nucleus speckle. The protein resides in the cytoplasm. Functionally, component of the cleavage factor Im (CFIm) complex that functions as an activator of the pre-mRNA 3'-end cleavage and polyadenylation processing required for the maturation of pre-mRNA into functional mRNAs. CFIm contributes to the recruitment of multiprotein complexes on specific sequences on the pre-mRNA 3'-end, so called cleavage and polyadenylation signals (pA signals). Most pre-mRNAs contain multiple pA signals, resulting in alternative cleavage and polyadenylation (APA) producing mRNAs with variable 3'-end formation. The CFIm complex acts as a key regulator of cleavage and polyadenylation site choice during APA through its binding to 5'-UGUA-3' elements localized in the 3'-untranslated region (UTR) for a huge number of pre-mRNAs. CPSF6 enhances NUDT21/CPSF5 binding to 5'-UGUA-3' elements localized upstream of pA signals and promotes RNA looping, and hence activates directly the mRNA 3'-processing machinery. Plays a role in mRNA export. Its function is as follows. (Microbial infection) Binds HIV-1 capsid-nucleocapsid (HIV-1 CA-NC) complexes and might thereby promote the integration of the virus in the nucleus of dividing cells (in vitro). This chain is Cleavage and polyadenylation specificity factor subunit 6, found in Homo sapiens (Human).